A 496-amino-acid polypeptide reads, in one-letter code: Genome polyprotein (496 aa).

Residues 1 to 447 (SRCTHLENRD…HTVLGGAFNS (447 aa)) lie on the Extracellular side of the membrane. 6 cysteine pairs are disulfide-bonded: cysteine 3–cysteine 30, cysteine 60–cysteine 116, cysteine 60–cysteine 121, cysteine 74–cysteine 105, cysteine 92–cysteine 116, and cysteine 92–cysteine 121. Residues 98–111 (DRGWGNHCGLFGKG) form a fusion peptide region. The N-linked (GlcNAc...) asparagine; by host glycan is linked to asparagine 154. 2 disulfide bridges follow: cysteine 186–cysteine 290 and cysteine 307–cysteine 338. The chain crosses the membrane as a helical span at residues 448 to 468 (IFGGVGFLPKLLMGVALAWLG). Residues 469–479 (LNTRNPTMSMS) lie on the Cytoplasmic side of the membrane. Residues 480–496 (FLLAGGLVLAMTLGVGA) traverse the membrane as a helical segment.

In terms of assembly, homodimer; in the endoplasmic reticulum and Golgi. N-glycosylated.

It localises to the virion membrane. The protein resides in the host endoplasmic reticulum membrane. Functionally, binds to host cell surface receptor and mediates fusion between viral and cellular membranes. Envelope protein is synthesized in the endoplasmic reticulum in the form of heterodimer with protein prM. They play a role in virion budding in the ER, and the newly formed immature particle is covered with 60 spikes composed of heterodimer between precursor prM and envelope protein E. The virion is transported to the Golgi apparatus where the low pH causes dissociation of PrM-E heterodimers and formation of E homodimers. prM-E cleavage is ineficient, and many virions are only partially matured. These uncleaved prM would play a role in immune evasion. The protein is Genome polyprotein of Bos taurus (Bovine).